The sequence spans 668 residues: MKPASRLFYLSLFALWSPEAQCKSDESCAISPKAIVSDACASYSTLEQLNRDIKPALEDLTRTTDFFSHYRLNLFNKECPFWNDENGMCGNIACAVETLDNEEDIPEVWRAKELGKLEGPRAKHPGKSVQKEEPKRPLQGKLGEDVGESCVVEYDDECDDRDYCVPDDEGASSKGDYVSLLRNPERFTGYAGDGAKQVWDAIYRENCFQKSSFPKSASLGDTYSVPKNPAAQDFRAVMQAAGRQHMLEQQREQNPLVPFVTKTGLESEDECLEKRVFYKIVSGMHASISTHLCWDFLNQTTGQWQPNLSCYINRLHKFPERISNLYFNYALLTRAVAKLGPYLSSHEEYTFCTGDPAQDADTRAKVLAVTSKAANTVPGPVFDESIMFKNGEGPSLKEDFRNRFRNISRLMDCVGCDKCRLWGKLQTAGYGTALKVLFEFANNDTSATSSETDEIPFKLKRTELVALFNTYARLSSSLDAIQKFRAMVEESEEGQQPQSHEQIEGSENSGAHHIPDRAKKPRHVIVPTPDAADHAEASDTNTATTAVDEAKAAGVTPAPKVEHQQQVEVDNNDDDDDDDEFHEFQRQPQQPDTDPNFVYKKRTLKDDFENEFRAVFAAFKLVIRSYLNLPALIYEITITELKRFWQFYVGLPVMPRTWEFRRPSLDEL.

An N-terminal signal peptide occupies residues 1-22 (MKPASRLFYLSLFALWSPEAQC). 4 disulfide bridges follow: cysteine 79–cysteine 413, cysteine 89–cysteine 94, cysteine 150–cysteine 352, and cysteine 416–cysteine 419. The disordered stretch occupies residues 116–142 (KLEGPRAKHPGKSVQKEEPKRPLQGKL). Residues arginine 186, threonine 188, tryptophan 199, serine 282, and histidine 285 each contribute to the FAD site. Asparagine 298 and asparagine 307 each carry an N-linked (GlcNAc...) asparagine glycan. Arginine 314 contributes to the FAD binding site. A glycan (N-linked (GlcNAc...) asparagine) is linked at asparagine 406. The active-site Nucleophile is cysteine 416. Residue cysteine 419 is part of the active site. A glycan (N-linked (GlcNAc...) asparagine) is linked at asparagine 443. Disordered stretches follow at residues 488 to 519 (VEES…DRAK) and 554 to 597 (GVTP…DPNF). Residues 494-509 (GQQPQSHEQIEGSENS) are compositionally biased toward polar residues. Acidic residues predominate over residues 570 to 581 (DNNDDDDDDDEF).

This sequence belongs to the EROs family. As to quaternary structure, may function both as a monomer and a homodimer. It depends on FAD as a cofactor.

The protein resides in the endoplasmic reticulum membrane. In terms of biological role, essential oxidoreductase that oxidizes proteins in the endoplasmic reticulum to produce disulfide bonds. Acts by oxidizing directly pdi1 isomerase through a direct disulfide exchange. Does not act as a direct oxidant of folding substrate, but relies on pdi1 to transfer oxidizing equivalent. Does not oxidize all pdi related proteins, suggesting that it can discriminate between pdi1 and related proteins. Its reoxidation probably involves electron transfer to molecular oxygen via FAD. Acts independently of glutathione. May be responsible for a significant proportion of reactive oxygen species (ROS) in the cell, thereby being a source of oxidative stress. This chain is Endoplasmic reticulum oxidoreductin-1 (ero-1), found in Neurospora crassa (strain ATCC 24698 / 74-OR23-1A / CBS 708.71 / DSM 1257 / FGSC 987).